The primary structure comprises 388 residues: Succinate--CoA ligase [ADP-forming] subunit beta (388 aa).

The 237-residue stretch at 9-245 (KELLASYGLP…KSQENERELK (237 aa)) folds into the ATP-grasp domain. Residues Lys46, 53–55 (GRG), Glu100, Tyr103, and Glu108 contribute to the ATP site. The Mg(2+) site is built by Asn200 and Asp214. Substrate-binding positions include Asn265 and 322 to 324 (GIV).

Belongs to the succinate/malate CoA ligase beta subunit family. As to quaternary structure, heterotetramer of two alpha and two beta subunits. It depends on Mg(2+) as a cofactor.

It carries out the reaction succinate + ATP + CoA = succinyl-CoA + ADP + phosphate. The enzyme catalyses GTP + succinate + CoA = succinyl-CoA + GDP + phosphate. It functions in the pathway carbohydrate metabolism; tricarboxylic acid cycle; succinate from succinyl-CoA (ligase route): step 1/1. Its function is as follows. Succinyl-CoA synthetase functions in the citric acid cycle (TCA), coupling the hydrolysis of succinyl-CoA to the synthesis of either ATP or GTP and thus represents the only step of substrate-level phosphorylation in the TCA. The beta subunit provides nucleotide specificity of the enzyme and binds the substrate succinate, while the binding sites for coenzyme A and phosphate are found in the alpha subunit. This is Succinate--CoA ligase [ADP-forming] subunit beta from Neisseria meningitidis serogroup A / serotype 4A (strain DSM 15465 / Z2491).